The chain runs to 521 residues: MIKQALISVSDKTGVLDFARALSAMGVNILSTGGTAKLLAENGISVTEVADYTGFPEMLDGRVKTLHPKVHGGILARRDFPEHVAALSKHDIPTIDMVVVNLYPFQQTVARAECSLEDAIENIDIGGPAMLRSSAKNHKDVIVICDPSDYSLVLHELNTNNGEATYETKFALAKKVFAHTAQYDGAITNYFTSLGADKQHATRSSYPATLNLHFEKVQEMRYGENPHQSAAFYRESNPQAGALANYAQLQGKELSYNNIADADAAWECVKTFDEAACVIIKHANPCGVAVGITPFEAYSKALQTDPTSAFGGIIAFNREVDGNAAEAVAKQFVEVLIAPSFTEQAKKIFAAKQNVRLLEIPLGDAVNSHDFKRVGGGLLVQSPDAKNVTLAELKVVSKKQPTPQQLQDLMFAWRVAKFVKSNAIVFCANGMTMGVGAGQMSRIDSARIAAIKAQNAGLSLVGTAVASDAFFPFRDGLDVVVEAGATSVIHPGGSMRDQEVIDAADEHGIVMLLTGTRHFRH.

Residues 1-145 (MIKQALISVS…KNHKDVIVIC (145 aa)) enclose the MGS-like domain.

It belongs to the PurH family.

The enzyme catalyses (6R)-10-formyltetrahydrofolate + 5-amino-1-(5-phospho-beta-D-ribosyl)imidazole-4-carboxamide = 5-formamido-1-(5-phospho-D-ribosyl)imidazole-4-carboxamide + (6S)-5,6,7,8-tetrahydrofolate. The catalysed reaction is IMP + H2O = 5-formamido-1-(5-phospho-D-ribosyl)imidazole-4-carboxamide. Its pathway is purine metabolism; IMP biosynthesis via de novo pathway; 5-formamido-1-(5-phospho-D-ribosyl)imidazole-4-carboxamide from 5-amino-1-(5-phospho-D-ribosyl)imidazole-4-carboxamide (10-formyl THF route): step 1/1. The protein operates within purine metabolism; IMP biosynthesis via de novo pathway; IMP from 5-formamido-1-(5-phospho-D-ribosyl)imidazole-4-carboxamide: step 1/1. This Herminiimonas arsenicoxydans protein is Bifunctional purine biosynthesis protein PurH.